Here is a 316-residue protein sequence, read N- to C-terminus: N-acetylmuramic acid 6-phosphate etherase (316 aa).

The interval 1–25 (MAVFDPDLQPSSDRGHLLTEQSNQR) is disordered. The SIS domain occupies 66–229 (VANRLRAGGR…STAVMVKLGK (164 aa)). Glutamate 94 functions as the Proton donor in the catalytic mechanism. Residue glutamate 125 is part of the active site.

The protein belongs to the GCKR-like family. MurNAc-6-P etherase subfamily. Homodimer.

The enzyme catalyses N-acetyl-D-muramate 6-phosphate + H2O = N-acetyl-D-glucosamine 6-phosphate + (R)-lactate. Its pathway is amino-sugar metabolism; N-acetylmuramate degradation. Its function is as follows. Specifically catalyzes the cleavage of the D-lactyl ether substituent of MurNAc 6-phosphate, producing GlcNAc 6-phosphate and D-lactate. The polypeptide is N-acetylmuramic acid 6-phosphate etherase (Synechococcus sp. (strain CC9605)).